A 64-amino-acid chain; its full sequence is GGDECNINEHRSPQETLPDVPHCANINLLDYEVCRTAHPQFRLPATSRTLCAGILEGGKDTCHR.

2 cysteine pairs are disulfide-bonded: Cys5/Cys23 and Cys34/Cys51.

Monomer. In terms of tissue distribution, expressed by the vanom gland.

It localises to the secreted. Its function is as follows. Thrombin-like snake venom serine protease. The protein is Thrombin-like enzyme collinein-4 of Crotalus durissus collilineatus (Brazilian rattlesnake).